Here is a 176-residue protein sequence, read N- to C-terminus: NAD(P)H-quinone oxidoreductase subunit 6, chloroplastic (176 aa).

5 consecutive transmembrane segments (helical) span residues 10–30 (ILML…VLLT), 33–53 (IYSA…YFLL), 60–80 (VAQL…AVMF), 95–115 (IGDG…MTTI), and 152–172 (FYLP…GAIT).

Belongs to the complex I subunit 6 family. As to quaternary structure, NDH is composed of at least 16 different subunits, 5 of which are encoded in the nucleus.

It is found in the plastid. Its subcellular location is the chloroplast thylakoid membrane. The catalysed reaction is a plastoquinone + NADH + (n+1) H(+)(in) = a plastoquinol + NAD(+) + n H(+)(out). It catalyses the reaction a plastoquinone + NADPH + (n+1) H(+)(in) = a plastoquinol + NADP(+) + n H(+)(out). Functionally, NDH shuttles electrons from NAD(P)H:plastoquinone, via FMN and iron-sulfur (Fe-S) centers, to quinones in the photosynthetic chain and possibly in a chloroplast respiratory chain. The immediate electron acceptor for the enzyme in this species is believed to be plastoquinone. Couples the redox reaction to proton translocation, and thus conserves the redox energy in a proton gradient. The chain is NAD(P)H-quinone oxidoreductase subunit 6, chloroplastic (ndhG) from Triticum aestivum (Wheat).